A 316-amino-acid chain; its full sequence is Methionyl-tRNA formyltransferase (316 aa).

110–113 (SLLP) contributes to the (6S)-5,6,7,8-tetrahydrofolate binding site.

Belongs to the Fmt family.

It carries out the reaction L-methionyl-tRNA(fMet) + (6R)-10-formyltetrahydrofolate = N-formyl-L-methionyl-tRNA(fMet) + (6S)-5,6,7,8-tetrahydrofolate + H(+). In terms of biological role, attaches a formyl group to the free amino group of methionyl-tRNA(fMet). The formyl group appears to play a dual role in the initiator identity of N-formylmethionyl-tRNA by promoting its recognition by IF2 and preventing the misappropriation of this tRNA by the elongation apparatus. The sequence is that of Methionyl-tRNA formyltransferase from Halothermothrix orenii (strain H 168 / OCM 544 / DSM 9562).